The sequence spans 583 residues: Steryl-sulfatase (583 aa).

The first 21 residues, 1-21 (MPLRKMKIPFLLLFFLWEAES), serve as a signal peptide directing secretion. Over 22 to 184 (HAASRPNIIL…GSVFTTGFKR (163 aa)) the chain is Lumenal. The Ca(2+) site is built by aspartate 35 and aspartate 36. Asparagine 47 carries an N-linked (GlcNAc...) asparagine glycan. Cysteine 75 lines the Ca(2+) pocket. Cysteine 75 serves as the catalytic Nucleophile. The residue at position 75 (cysteine 75) is a 3-oxoalanine (Cys). The active site involves histidine 136. 2 disulfide bridges follow: cysteine 141-cysteine 148 and cysteine 170-cysteine 242. A helical membrane pass occupies residues 185 to 208 (LVFLPLQIVGVTLLTLAALNCLGL). Residues 209–212 (LHVP) are Cytoplasmic-facing. The helical transmembrane segment at 213–234 (LGVFFSLLFLAALILTLFLGFL) threads the bilayer. The Lumenal segment spans residues 235 to 583 (HYFRPLNCFM…REKQDKRLSR (349 aa)). Asparagine 259 is a glycosylation site (N-linked (GlcNAc...) asparagine). Residues aspartate 342 and glutamine 343 each coordinate Ca(2+). Cystine bridges form between cysteine 446–cysteine 489, cysteine 481–cysteine 487, cysteine 562–cysteine 570, and cysteine 563–cysteine 572.

This sequence belongs to the sulfatase family. In terms of assembly, homodimer. Ca(2+) is required as a cofactor. The conversion to 3-oxoalanine (also known as C-formylglycine, FGly), of a serine or cysteine residue in prokaryotes and of a cysteine residue in eukaryotes, is critical for catalytic activity.

The protein localises to the cytoplasmic vesicle. The protein resides in the secretory vesicle. It localises to the microneme membrane. It is found in the endoplasmic reticulum membrane. The catalysed reaction is dehydroepiandrosterone 3-sulfate + H2O = 3beta-hydroxyandrost-5-en-17-one + sulfate + H(+). It catalyses the reaction estrone 3-sulfate + H2O = estrone + sulfate + H(+). In terms of biological role, catalyzes the conversion of sulfated steroid precursors, such as dehydroepiandrosterone sulfate (DHEA-S) and estrone sulfate to the free steroid. The sequence is that of Steryl-sulfatase (STS) from Homo sapiens (Human).